The following is a 268-amino-acid chain: Tryptophan synthase alpha chain (268 aa).

Active-site proton acceptor residues include glutamate 49 and aspartate 60.

The protein belongs to the TrpA family. In terms of assembly, tetramer of two alpha and two beta chains.

The enzyme catalyses (1S,2R)-1-C-(indol-3-yl)glycerol 3-phosphate + L-serine = D-glyceraldehyde 3-phosphate + L-tryptophan + H2O. It functions in the pathway amino-acid biosynthesis; L-tryptophan biosynthesis; L-tryptophan from chorismate: step 5/5. The alpha subunit is responsible for the aldol cleavage of indoleglycerol phosphate to indole and glyceraldehyde 3-phosphate. This chain is Tryptophan synthase alpha chain, found in Xylella fastidiosa (strain 9a5c).